A 596-amino-acid polypeptide reads, in one-letter code: MFTNIHSIARNSSCENELEELMHQIDIMVSHRKVEWEKHVKVLEQKLEAQDRELTEARNLVDEKNHEIGILCKKLEGVDTAQHEMAQNYERQLQALKFQLCKLKKSYEKLHFHQEKHQKNENAAQERSRCELQWLTQKIEEFKARSREWEKQRVFYQDQLKSLDEQRKTLAEKCQLFQKESLSYQEQLSSQKQLQSEAITNNQSEMRRLRCLLDTSQETIRSDGVIIENLKSTVKEITLSRDSLKDENQQLLQELRRCQKQSQNMEAQLYKAKLELQSCNDLLRVPALEERQAQKETANLANQKTAQGEEASFQVTDPRMNYMTSEPEHKSFNLSKSEKYQAENDLHGTEAKNSDLERLRKDIGDLTAKLNQKDVTIATVSRKVSRLERELELKGAQNRQTSMPLSQKDVIAELESEMPQIHAVNKAPQTDSGEVDPWISIKCGEHDKPQKHRSFHGENNSLKPTNYADTRNHSVGSEWESEKSLCPWNTPTLGSATDDDCDLVDNENEWLSLYNSTLYPGLDLPPISYACDQLKDSTNSSLAGSSLISAAEKFLLEETRRASDFEKILNSHIEEMKRNSESTVSRYQSHGQSRHI.

Coiled coils occupy residues isoleucine 8–isoleucine 68, cysteine 130–glutamate 180, and isoleucine 227–arginine 284. Over residues threonine 297–alanine 306 the composition is skewed to polar residues. The disordered stretch occupies residues threonine 297–threonine 316. A coiled-coil region spans residues serine 337–serine 402. Positions aspartate 447–tyrosine 467 are disordered. The span at glycine 457–tyrosine 467 shows a compositional bias: polar residues.

Belongs to the CEP63 family.

Its subcellular location is the cytoplasm. In terms of biological role, key structural component of the deuterosome, a structure that promotes de novo centriole amplification in multiciliated cells. Deuterosome-mediated centriole amplification occurs in terminally differentiated multiciliated cells and can generate more than 100 centrioles. Probably sufficient for the specification and formation of the deuterosome inner core. The sequence is that of Deuterosome assembly protein 1 from Xenopus tropicalis (Western clawed frog).